We begin with the raw amino-acid sequence, 362 residues long: UV excision repair protein RAD23 homolog A (362 aa).

The Ubiquitin-like domain maps to Met-1–Thr-81. Disordered stretches follow at residues Lys-80–Gly-160 and Gly-201–Gly-227. Residues Pro-88 to Ser-109 are compositionally biased toward low complexity. A Glycyl lysine isopeptide (Lys-Gly) (interchain with G-Cter in ubiquitin) cross-link involves residue Lys-122. Phosphoserine is present on residues Ser-123, Ser-128, Ser-133, Ser-136, and Ser-138. Low complexity predominate over residues Glu-126–Ser-144. One can recognise a UBA 1 domain in the interval Ser-161–Gly-201. Ser-205, Ser-294, and Ser-356 each carry phosphoserine. The UBA 2 domain occupies Pro-317–Gln-357.

The protein belongs to the RAD23 family. As to quaternary structure, interacts with XPC; the interaction is suggesting the existence of a functional equivalent variant XPC complex. Interacts with PSMD4 and PSMC5. Interacts with ATXN3. Interacts with UBQLN2.

Its subcellular location is the nucleus. Multiubiquitin chain receptor involved in modulation of proteasomal degradation. Binds to 'Lys-48'-linked polyubiquitin chains in a length-dependent manner and with a lower affinity to 'Lys-63'-linked polyubiquitin chains. Proposed to be capable to bind simultaneously to the 26S proteasome and to polyubiquitinated substrates and to deliver ubiquitinated proteins to the proteasome. Functionally, involved in nucleotide excision repair and is thought to be functional equivalent for RAD23B in global genome nucleotide excision repair (GG-NER) by association with XPC. In vitro, XPC:RAD23A dimer has NER activity. Can stabilize XPC. The chain is UV excision repair protein RAD23 homolog A (RAD23A) from Bos taurus (Bovine).